The sequence spans 522 residues: Cyclic GMP-AMP synthase (522 aa).

Positions 1-144 (MQPWHGKAMQ…PPGPWDVPSP (144 aa)) are disordered. DNA-binding stretches follow at residues 1 to 160 (MQPW…DAAP) and 173 to 215 (KLSR…GSYY). N6-acetyllysine is present on Lys7. Position 13 is a phosphoserine (Ser13). Residue Lys21 is modified to N6-acetyllysine. Ser37 carries the post-translational modification Phosphoserine. N6-acetyllysine occurs at positions 47, 50, 56, 62, and 63. Residue Ser64 is modified to Phosphoserine. Over residues 64-73 (SAPDTQERPP) the composition is skewed to basic and acidic residues. Residues 64-75 (SAPDTQERPPVR) are required for association with the cell membrane. Position 68 is a phosphothreonine (Thr68). Residues Lys82 and Lys83 each carry the N6-acetyllysine modification. The segment covering 88-97 (AQDTQPSDAT) has biased composition (polar residues). The residue at position 91 (Thr91) is a Phosphothreonine. Phosphoserine occurs at positions 98, 116, and 129. Residues 98–118 (SAPGAEGLEPPAAREPALSRA) show a composition bias toward low complexity. The required for activation upon DNA viral infection stretch occupies residues 120 to 160 (SCRQRGARCSTKPRPPPGPWDVPSPGLPVSAPILVRRDAAP). N6-lactoyllysine is present on Lys131. Positions 132–144 (PRPPPGPWDVPSP) are enriched in pro residues. A Phosphoserine modification is found at Ser143. Positions 169 to 174 (LEKLKL) match the Nuclear export signal motif. Lys173 participates in a covalent cross-link: Glycyl lysine isopeptide (Lys-Gly) (interchain with G-Cter in ubiquitin). At Asp191 the chain carries PolyADP-ribosyl aspartic acid. Position 210 is a (Microbial infection) Deamidated asparagine; by herpes simplex virus 1/HHV-1 UL37 (Asn210). Thr211 provides a ligand contact to GTP. At Ser213 the chain carries Phosphoserine. Ser213 is an ATP binding site. At Tyr215 the chain carries Phosphotyrosine; by BLK. Mg(2+)-binding residues include Glu225 and Asp227. 225-227 (EFD) is an ATP binding site. A 2',3'-cGAMP-binding site is contributed by Asp227. A Glycyl lysine isopeptide (Lys-Gly) (interchain with G-Cter in SUMO) cross-link involves residue Lys231. A Glycyl lysine isopeptide (Lys-Gly) (interchain with G-Cter in ubiquitin) cross-link involves residue Lys285. Glu286 carries the 5-glutamyl polyglutamate modification. A Nuclear localization signal motif is present at residues 295 to 305 (DVIMKRKRGGS). The KRKR-loop signature appears at 299 to 302 (KRKR). Ser305 is modified (phosphoserine; by CDK1 and PKB). Glu314 carries the post-translational modification 5-glutamyl glutamate. Asp319 contacts GTP. A Mg(2+)-binding site is contributed by Asp319. A 2',3'-cGAMP-binding site is contributed by Asp319. The interaction with collided ribosomes stretch occupies residues 341–382 (QNWLSAKVRKQLRLKPFYLVPKHAKEGNGFQEETWRLSFSHI). Lys347 participates in a covalent cross-link: Glycyl lysine isopeptide (Lys-Gly) (interchain with G-Cter in SUMO); alternate. Residue Lys347 forms a Glycyl lysine isopeptide (Lys-Gly) (interchain with G-Cter in ubiquitin); alternate linkage. Residues Lys362 and Arg376 each coordinate 2',3'-cGAMP. 376–383 (RLSFSHIE) is a GTP binding site. An ATP-binding site is contributed by 380-383 (SHIE). Residue Lys384 is modified to N6-acetyllysine. Residue Lys384 forms a Glycyl lysine isopeptide (Lys-Gly) (interchain with G-Cter in SUMO); alternate linkage. Residue Lys384 forms a Glycyl lysine isopeptide (Lys-Gly) (interchain with G-Cter in ubiquitin); alternate linkage. Residues 384–407 (KEILNNHGKSKTCCENKEEKCCRK) form a DNA-binding region. The residue at position 389 (Asn389) is a (Microbial infection) Deamidated asparagine; by herpes simplex virus 1/HHV-1 UL37. Residue His390 participates in Zn(2+) binding. N6-acetyllysine is present on residues Lys392 and Lys394. Residue Lys394 forms a Glycyl lysine isopeptide (Lys-Gly) (interchain with G-Cter in SUMO) linkage. Residues Cys396, Cys397, and Cys404 each coordinate Zn(2+). 2 S-palmitoyl cysteine lipidation sites follow: Cys404 and Cys405. Glycyl lysine isopeptide (Lys-Gly) (interchain with G-Cter in ubiquitin) cross-links involve residues Lys411, Lys414, Lys427, and Lys428. Lys414 is subject to N6-acetyllysine. ATP is bound at residue Lys414. The short motif at 427–429 (KKH) is the KKH-loop element. A phosphoserine mark is found at Ser434 and Ser435. 435–439 (SYHVK) is a binding site for ATP. 2 positions are modified to (Microbial infection) Deamidated glutamine; by herpes simplex virus 1/HHV-1 UL37: Gln451 and Gln454. Residue Cys474 is the site of S-palmitoyl cysteine attachment. Lys479 is covalently cross-linked (Glycyl lysine isopeptide (Lys-Gly) (interchain with G-Cter in SUMO); alternate). A Glycyl lysine isopeptide (Lys-Gly) (interchain with G-Cter in ubiquitin); alternate cross-link involves residue Lys479. At Lys506 the chain carries N6-methyllysine.

The protein belongs to the mab-21 family. In terms of assembly, monomer in the absence of DNA. Homodimer in presence of dsDNA: forms a 2:2 dimer with two enzymes binding to two DNA molecules. Interacts with nucleosomes; interaction is mainly mediated via histones H2A and H2B and inactivates the nucleotidyltransferase activity by blocking DNA-binding and subsequent activation. Interacts with PQBP1 (via WW domain). Interacts with TRIM14; this interaction recruits USP14, leading to deubiquitinate and stabilize CGAS and promote type I interferon production. Interacts with ZCCHC3; promoting sensing of dsDNA by CGAS. Interacts (when not monomethylated) with (poly-ADP-ribosylated) PARP1; interaction takes place in the nucleus and prevents the formation of the PARP1-TIMELESS complex. Interacts (when monomethylated) with SGF29; interaction with SGF29 prevents interaction with PARP1. Interacts with PCBP2; preventing the formation of liquid-like droplets in which CGAS is activated. Interacts with IRGM; promoting CGAS degradation. Interacts with DDX41. As to quaternary structure, (Microbial infection) Interacts with herpes virus 8/HHV-8 protein ORF52; this interaction inhibits cGAS enzymatic activity by preventing the formation of liquid-like droplets by CGAS. (Microbial infection) Interacts with herpes simplex virus 1 protein UL37; this interaction deaminates CGAS and inhibits its activation. In terms of assembly, (Microbial infection) Interacts with vaccinia virus protein OPG067; this interaction promotes CGAS proteasomal degradation. As to quaternary structure, (Microbial infection) Interacts with cytomegalovirus protein UL31; this interaction promotes dissociation of DNA from CGAS, thereby inhibiting the enzymatic activity of CGAS. (Microbial infection) Interacts with herpes simplex virus 1 tegument protein VP22 (UL49); this interaction inhibits cGAS enzymatic activity by preventing the formation of liquid-like droplets by CGAS. In terms of assembly, (Microbial infection) Interacts with herpesvirus 3 tegument protein VP22 (ORF9); this interaction inhibits cGAS enzymatic activity by preventing the formation of liquid-like droplets by CGAS. As to quaternary structure, (Microbial infection) Interacts with human cytomegalovirus proteins UL42 and UL83; these interactions result in the inhibition of cGAS-STING signaling. The cofactor is Mg(2+). It depends on Mn(2+) as a cofactor. Requires Zn(2+) as cofactor. The N-terminal disordered part (1-160) is phosphorylated by AURKB during the G2-M transition, blocking CGAS liquid phase separation and preventing activation. Phosphorylation at Tyr-215 by BLK promotes cytosolic retention. Localizes into the nucleus following dephosphorylation at Tyr-215. Phosphorylation at Ser-435 activates the nucleotidyltransferase activity. Dephosphorylation at Ser-435 by PPP6C impairs its ability to bind GTP, thereby inactivating it. Phosphorylation at Thr-68 and Ser-213 by PRKDC inhibits its cyclic GMP-AMP synthase activity by impairing homodimerization and activation. Phosphorylation at Ser-305 by AKT (AKT1, AKT2 or AKT3) suppresses the nucleotidyltransferase activity. Phosphorylation at Ser-305 by CDK1 during mitosis leads to its inhibition, thereby preventing CGAS activation by self-DNA during mitosis. Dephosphorylated at Ser-305 by protein phosphatase PP1 upon mitotic exit. Post-translationally, ubiquitinated at Lys-414 via 'Lys-48'-linked polyubiquitin chains, leading to its SQSTM1-mediated autophagic degradation. Interaction with TRIM14 promotes recruitment of USP14, leading to deubiquitinate Lys-414 and stabilize CGAS. Ubiquitinated at Lys-173 and Lys-384 by RNF185 via 'Lys-27'-linked polyubiquitination, promoting CGAS cyclic GMP-AMP synthase activity. Monoubiquitination at Lys-347 by TRIM56 promotes oligomerization and subsequent activation. Monoubiquitination by TRIM41 promotes CGAS activation. Ubiquitination at Lys-285 and Lys-479 via 'Lys-48'-linked polyubiquitination promotes its degradation. Deubiquitination at Lys-285 by USP29 promotes its stabilization. Deubiquitinated by USP27X, promoting its stabilization. Ubiquitinated at Lys-411 via 'Lys-63'-linked polyubiquitin chains by MARCHF8, leading to the inhibition of its DNA binding ability. In cycling cells, nucleosome-bound CGAS is ubiquitinated at Lys-427 and Lys-428 via 'Lys-48'-linked polyubiquitin chains by the ECS(SPSB3) complex, leading to its degradation: ubiquitination and degradation of nuclear CGAS during G1 and G2 phases is required to promote low intranuclear CGAS abundance before the next mitotic cycle. In terms of processing, sumoylated at Lys-231 and Lys-479 by TRIM38 in uninfected cells and during the early phase of viral infection, promoting its stability by preventing ubiquitination at Lys-285 and Lys-479, and subsequent degradation. Desumoylated by SENP2 during the late phase of viral infection. Sumoylation at Lys-347, Lys-384 and Lys-394 prevents DNA-binding, oligomerization and nucleotidyltransferase activity. Desumoylation at Lys-347, Lys-384 and Lys-394 by SENP7 relieves inhibition and activates CGAS. Polyglutamylated by TTLL6 at Glu-286, leading to impair DNA-binding activity. Monoglutamylated at Glu-314 by TTLL4, leading to impair the nucleotidyltransferase activity. Deglutamylated by AGBL5/CCP5 and AGBL6/CCP6. Post-translationally, acetylation at Lys-384, Lys-394 and Lys-414 inhibits the cyclic GMP-AMP synthase activity. Deacetylated upon cytosolic DNA challenge such as viral infections. Acetylation can be mediated by aspirin (acetylsalicylate) drug, which directly acetylates CGAS. Acetylation by aspirin efficiently inhibits CGAS-mediated immune responses and is able to suppress self-DNA-induced autoimmunity. Acetylation at Lys-47, Lys-56, Lys-62 and Lys-83 by KAT5 increases the cyclic GMP-AMP synthase activity by promoting DNA-binding and subsequent activation. In terms of processing, proteolytically cleaved by apoptotic caspases during apoptosis, leading to its inactivation. The damage of the nucleus and the mitochondria during apoptosis leads to leakage of nuclear and mitochondrial DNA, which activate CGAS: cleavage and inactivation during apoptosis in required to prevent cytokine overproduction. Cleaved by CASP3 at Asp-319 during virus-induced apoptosis, thereby inactivating it and preventing cytokine overproduction. Cleaved by CASP1 at Asp-140 and Asp-157 upon DNA virus infection; the cleavage impairs cGAMP production. Also cleaved by the pyroptotic CASP4 and CASP5 during non-canonical inflammasome activation; they don't cut at the same sites than CASP1. Degraded via selective autophagy following interaction with IRGM. IRGM promotes CGAS recruitment to autophagosome membranes, promoting its SQSTM1/p62-dependent autophagic degradation. Post-translationally, poly-ADP-ribosylation at Asp-191 by PARP1 impairs DNA-binding, thereby preventing the cyclic GMP-AMP synthase activity. In terms of processing, palmitoylation at Cys-474 by ZDHHC18 impairs DNA-binding, thereby preventing the cyclic GMP-AMP synthase activity. Palmitoylation at Cys-404 and Cys-405 by ZDHHC9 promotes homodimerization and cyclic GMP-AMP synthase activity. Depalmitoylation at Cys-404 and Cys-405 by LYPLAL1 impairs homodimerization and cyclic GMP-AMP synthase activity. Monomethylated at Lys-506 by SETD7. Monomethylation promotes interaction with SGF29, preventing interaction between PARP1 nad SGF29. Demethylation by RIOX1 promotes interaction with PARP1, followed by PARP1 inactivation. Post-translationally, lactylation by AARS2 prevents ability to undergo liquid-liquid phase separation (LLPS), thereby inhibiting CGAS activation. In terms of processing, (Microbial infection) Deamidated on 'Asn-210' by herpes simplex virus 1 protein UL37. This modification significantly reduces CGAS-dependent cGAMP production and innate immune signaling induced by dsDNA. (Microbial infection) Degraded by an autophagy-mediated mechanism in presence of Chikungunya virus capsid protein. In terms of tissue distribution, expressed in the monocytic cell line THP1.

It localises to the nucleus. The protein localises to the chromosome. Its subcellular location is the cell membrane. The protein resides in the cytoplasm. It is found in the cytosol. It carries out the reaction GTP + ATP = 2',3'-cGAMP + 2 diphosphate. The enzyme catalyses GTP + ATP = pppGp(2'-5')A + diphosphate. It catalyses the reaction pppGp(2'-5')A = 2',3'-cGAMP + diphosphate. The enzyme activity is strongly increased by double-stranded DNA (dsDNA), but not by single-stranded DNA or RNA. DNA-binding induces the formation of liquid-like droplets in which CGAS is activated. Liquid-like droplets also create a selective environment that restricts entry of negative regulators, such as TREX1 or BANF1/BAF, allowing sensing of DNA. A number of mechanisms exist to restrict its activity toward self-DNA. The nucleotidyltransferase activity is inhibited in the nucleus via its association with nucleosomes: interacts with the acidic patch of histones H2A and H2B, thereby blocking DNA-binding and subsequent activation. CGAS is also inactive when associated with mitotic chromatin. Chromatin-bound CGAS cannot be activated by exogenous DNA in mitotic cells: phosphorylation of the N-terminal disordered part by AURKB during the G2-M transition blocks CGAS liquid phase separation and activation. Activity toward self-DNA is inhibited by BANF1/BAF upon acute loss of nuclear membrane integrity: BANF1/BAF acts by outcompeting CGAS for DNA-binding, thereby preventing CGAS activation. DNA-induced activation at micronuclei is also limited by TREX1, which degrades micronuclear DNA upon nuclear envelope rupture, thereby preventing CGAS activation. CGAS can be released from nucleosomes and activated by MRE11 component of the MRN complex, which displaces CGAS from acidic-patch-mediated sequestration. Acetylation at Lys-384, Lys-394 and Lys-414 inhibits the cyclic GMP-AMP synthase activity. Inhibited by aspirin (acetylsalicylate) drug, which acetylates CGAS. Acetylation by KAT5 increases the cyclic GMP-AMP synthase activity by promoting DNA-binding and subsequent activation. Phosphorylation at Ser-305 suppresses the nucleotidyltransferase activity. Phosphorylation at Ser-435 promotes the cyclic GMP-AMP synthase activity. Phosphorylation at Thr-68 and Ser-213 inhibits its cyclic GMP-AMP synthase activity. Ubiquitination at Lys-173 and Lys-384 via 'Lys-27'-linked polyubiquitination enhances the cyclic GMP-AMP synthase activity. Monoubiquitination at Lys-347 promotes oligomerization and subsequent activation. Sumoylation at Lys-347, Lys-384 and Lys-394 prevents DNA-binding, oligomerization and nucleotidyltransferase activity. The enzyme activity is impaired by the cleavage at Asp-140 and Asp-157 produced by CASP1. In addition to DNA, also activated by collided ribosomes upon translation stress: specifically binds collided ribosomes, promoting its activation and triggering type-I interferon production. Strongly inhibited by compound PF-06928215, which is specific for human protein. Inhibited by small-molecule inhibitors with a pyridoindole tricyclic core G108, G140 and G150. With respect to regulation, (Microbial infection) Nucleotidyltransferase activity is inhibited by different herpesvirus tegument proteins (Herpes simplex virus 1 tegument protein VP22, herpes virus 8 protein ORF52 and herpesvirus 3 tegument protein VP22/ORF9). Viral tegument proteins act by disrupting liquid-like droplets in which CGAS is activated, thereby preventing CGAS activity. Functionally, nucleotidyltransferase that catalyzes the formation of cyclic GMP-AMP (2',3'-cGAMP) from ATP and GTP and plays a key role in innate immunity. Catalysis involves both the formation of a 2',5' phosphodiester linkage at the GpA step and the formation of a 3',5' phosphodiester linkage at the ApG step, producing c[G(2',5')pA(3',5')p]. Acts as a key DNA sensor: directly binds double-stranded DNA (dsDNA), inducing the formation of liquid-like droplets in which CGAS is activated, leading to synthesis of 2',3'-cGAMP, a second messenger that binds to and activates STING1, thereby triggering type-I interferon production. Preferentially recognizes and binds curved long dsDNAs of a minimal length of 40 bp. Acts as a key foreign DNA sensor, the presence of double-stranded DNA (dsDNA) in the cytoplasm being a danger signal that triggers the immune responses. Has antiviral activity by sensing the presence of dsDNA from DNA viruses in the cytoplasm. Also acts as an innate immune sensor of infection by retroviruses, such as HIV-2, by detecting the presence of reverse-transcribed DNA in the cytosol. In contrast, HIV-1 is poorly sensed by CGAS, due to its capsid that cloaks viral DNA from CGAS detection. Detection of retroviral reverse-transcribed DNA in the cytosol may be indirect and be mediated via interaction with PQBP1, which directly binds reverse-transcribed retroviral DNA. Also detects the presence of DNA from bacteria, such as M.tuberculosis. 2',3'-cGAMP can be transferred from producing cells to neighboring cells through gap junctions, leading to promote STING1 activation and convey immune response to connecting cells. 2',3'-cGAMP can also be transferred between cells by virtue of packaging within viral particles contributing to IFN-induction in newly infected cells in a cGAS-independent but STING1-dependent manner. Also senses the presence of neutrophil extracellular traps (NETs) that are translocated to the cytosol following phagocytosis, leading to synthesis of 2',3'-cGAMP. In addition to foreign DNA, can also be activated by endogenous nuclear or mitochondrial DNA. When self-DNA leaks into the cytosol during cellular stress (such as mitochondrial stress, SARS-CoV-2 infection causing severe COVID-19 disease, DNA damage, mitotic arrest or senescence), or is present in form of cytosolic micronuclei, CGAS is activated leading to a state of sterile inflammation. Acts as a regulator of cellular senescence by binding to cytosolic chromatin fragments that are present in senescent cells, leading to trigger type-I interferon production via STING1 and promote cellular senescence. Also involved in the inflammatory response to genome instability and double-stranded DNA breaks: acts by localizing to micronuclei arising from genome instability. Micronuclei, which are frequently found in cancer cells, consist of chromatin surrounded by their own nuclear membrane: following breakdown of the micronuclear envelope, a process associated with chromothripsis, CGAS binds self-DNA exposed to the cytosol, leading to 2',3'-cGAMP synthesis and subsequent activation of STING1 and type-I interferon production. Activated in response to prolonged mitotic arrest, promoting mitotic cell death. In a healthy cell, CGAS is however kept inactive even in cellular events that directly expose it to self-DNA, such as mitosis, when cGAS associates with chromatin directly after nuclear envelope breakdown or remains in the form of postmitotic persistent nuclear cGAS pools bound to chromatin. Nuclear CGAS is inactivated by chromatin via direct interaction with nucleosomes, which block CGAS from DNA binding and thus prevent CGAS-induced autoimmunity. Also acts as a suppressor of DNA repair in response to DNA damage: inhibits homologous recombination repair by interacting with PARP1, the CGAS-PARP1 interaction leading to impede the formation of the PARP1-TIMELESS complex. In addition to DNA, also sense translation stress: in response to translation stress, translocates to the cytosol and associates with collided ribosomes, promoting its activation and triggering type-I interferon production. In contrast to other mammals, human CGAS displays species-specific mechanisms of DNA recognition and produces less 2',3'-cGAMP, allowing a more fine-tuned response to pathogens. The polypeptide is Cyclic GMP-AMP synthase (Homo sapiens (Human)).